Reading from the N-terminus, the 180-residue chain is MIIEEQVVLVDQQGRALGLQEKMQAHRDGALHLAFSVLLYRETTQGIEFLMQQRALGKYHSGGLWTNTCCSHPRQGETLEQAGLRRLTEEMGIVGLESLDDIASFVYRAELDNQLIEHEWDHVLIANGTELAIIPNSEEVKSYRWWSKADLELGLADTPELFTAWFPQVLQYVINELSSQ.

His-26 and His-32 together coordinate Mn(2+). In terms of domain architecture, Nudix hydrolase spans 30–168; sequence ALHLAFSVLL…PELFTAWFPQ (139 aa). Residue Cys-70 is part of the active site. Cys-70 is a Mg(2+) binding site. His-72 contacts Mn(2+). Glu-90 serves as a coordination point for Mg(2+). Mn(2+) is bound by residues Glu-117 and Glu-119. Glu-119 is a catalytic residue.

It belongs to the IPP isomerase type 1 family. It depends on Mg(2+) as a cofactor. The cofactor is Mn(2+).

The protein localises to the cytoplasm. It catalyses the reaction isopentenyl diphosphate = dimethylallyl diphosphate. It functions in the pathway isoprenoid biosynthesis; dimethylallyl diphosphate biosynthesis; dimethylallyl diphosphate from isopentenyl diphosphate: step 1/1. Its function is as follows. Catalyzes the 1,3-allylic rearrangement of the homoallylic substrate isopentenyl (IPP) to its highly electrophilic allylic isomer, dimethylallyl diphosphate (DMAPP). This Photobacterium profundum (strain SS9) protein is Isopentenyl-diphosphate Delta-isomerase.